The chain runs to 120 residues: UPF0231 protein YacL (120 aa).

The protein belongs to the UPF0231 family.

The protein is UPF0231 protein YacL of Escherichia coli O139:H28 (strain E24377A / ETEC).